We begin with the raw amino-acid sequence, 305 residues long: Methionyl-tRNA formyltransferase (305 aa).

Residue 110–113 (SLLP) participates in (6S)-5,6,7,8-tetrahydrofolate binding.

Belongs to the Fmt family.

The enzyme catalyses L-methionyl-tRNA(fMet) + (6R)-10-formyltetrahydrofolate = N-formyl-L-methionyl-tRNA(fMet) + (6S)-5,6,7,8-tetrahydrofolate + H(+). In terms of biological role, attaches a formyl group to the free amino group of methionyl-tRNA(fMet). The formyl group appears to play a dual role in the initiator identity of N-formylmethionyl-tRNA by promoting its recognition by IF2 and preventing the misappropriation of this tRNA by the elongation apparatus. The protein is Methionyl-tRNA formyltransferase of Gluconacetobacter diazotrophicus (strain ATCC 49037 / DSM 5601 / CCUG 37298 / CIP 103539 / LMG 7603 / PAl5).